A 180-amino-acid polypeptide reads, in one-letter code: Translation initiation factor IF-3 (180 aa).

It belongs to the IF-3 family. Monomer.

The protein resides in the cytoplasm. Functionally, IF-3 binds to the 30S ribosomal subunit and shifts the equilibrium between 70S ribosomes and their 50S and 30S subunits in favor of the free subunits, thus enhancing the availability of 30S subunits on which protein synthesis initiation begins. The polypeptide is Translation initiation factor IF-3 (Klebsiella pneumoniae).